Here is a 508-residue protein sequence, read N- to C-terminus: Photosystem II CP47 reaction center protein (508 aa).

The next 6 helical transmembrane spans lie at 21–36 (AVHI…WAGS), 101–115 (IVFS…IWHW), 140–156 (GIHL…FGAF), 203–218 (IAAG…FHLS), 237–252 (VLSS…AFVV), and 457–472 (SFAL…HGAR).

The protein belongs to the PsbB/PsbC family. PsbB subfamily. In terms of assembly, PSII is composed of 1 copy each of membrane proteins PsbA, PsbB, PsbC, PsbD, PsbE, PsbF, PsbH, PsbI, PsbJ, PsbK, PsbL, PsbM, PsbT, PsbX, PsbY, PsbZ, Psb30/Ycf12, at least 3 peripheral proteins of the oxygen-evolving complex and a large number of cofactors. It forms dimeric complexes. Binds multiple chlorophylls. PSII binds additional chlorophylls, carotenoids and specific lipids. serves as cofactor.

Its subcellular location is the plastid. It is found in the chloroplast thylakoid membrane. One of the components of the core complex of photosystem II (PSII). It binds chlorophyll and helps catalyze the primary light-induced photochemical processes of PSII. PSII is a light-driven water:plastoquinone oxidoreductase, using light energy to abstract electrons from H(2)O, generating O(2) and a proton gradient subsequently used for ATP formation. The sequence is that of Photosystem II CP47 reaction center protein from Nandina domestica (Heavenly bamboo).